The following is a 220-amino-acid chain: Deoxyribose-phosphate aldolase (220 aa).

Residue aspartate 89 is the Proton donor/acceptor of the active site. The active-site Schiff-base intermediate with acetaldehyde is lysine 151. Lysine 180 serves as the catalytic Proton donor/acceptor.

This sequence belongs to the DeoC/FbaB aldolase family. DeoC type 1 subfamily.

It is found in the cytoplasm. It carries out the reaction 2-deoxy-D-ribose 5-phosphate = D-glyceraldehyde 3-phosphate + acetaldehyde. It functions in the pathway carbohydrate degradation; 2-deoxy-D-ribose 1-phosphate degradation; D-glyceraldehyde 3-phosphate and acetaldehyde from 2-deoxy-alpha-D-ribose 1-phosphate: step 2/2. Functionally, catalyzes a reversible aldol reaction between acetaldehyde and D-glyceraldehyde 3-phosphate to generate 2-deoxy-D-ribose 5-phosphate. The protein is Deoxyribose-phosphate aldolase of Streptococcus uberis (strain ATCC BAA-854 / 0140J).